The following is a 257-amino-acid chain: Thiazole synthase (257 aa).

Lys100 serves as the catalytic Schiff-base intermediate with DXP. Residues Gly161, 187 to 188 (AG), and 209 to 210 (NT) contribute to the 1-deoxy-D-xylulose 5-phosphate site.

Belongs to the ThiG family. As to quaternary structure, homotetramer. Forms heterodimers with either ThiH or ThiS.

Its subcellular location is the cytoplasm. It catalyses the reaction [ThiS sulfur-carrier protein]-C-terminal-Gly-aminoethanethioate + 2-iminoacetate + 1-deoxy-D-xylulose 5-phosphate = [ThiS sulfur-carrier protein]-C-terminal Gly-Gly + 2-[(2R,5Z)-2-carboxy-4-methylthiazol-5(2H)-ylidene]ethyl phosphate + 2 H2O + H(+). Its pathway is cofactor biosynthesis; thiamine diphosphate biosynthesis. Catalyzes the rearrangement of 1-deoxy-D-xylulose 5-phosphate (DXP) to produce the thiazole phosphate moiety of thiamine. Sulfur is provided by the thiocarboxylate moiety of the carrier protein ThiS. In vitro, sulfur can be provided by H(2)S. The chain is Thiazole synthase from Pelagibacter ubique (strain HTCC1062).